We begin with the raw amino-acid sequence, 165 residues long: Transcriptional repressor NrdR (165 aa).

A zinc finger spans residues 3–34; it reads CPYCGQLNNRVVDSRLSRSEFAVRRRRECLDC. Residues 49–139 form the ATP-cone domain; sequence VMVVKKDGRR…VYREFKDVDD (91 aa).

The protein belongs to the NrdR family. The cofactor is Zn(2+).

Functionally, negatively regulates transcription of bacterial ribonucleotide reductase nrd genes and operons by binding to NrdR-boxes. This chain is Transcriptional repressor NrdR, found in Desulforapulum autotrophicum (strain ATCC 43914 / DSM 3382 / VKM B-1955 / HRM2) (Desulfobacterium autotrophicum).